The chain runs to 473 residues: Serine carboxypeptidase-like 42 (473 aa).

An N-terminal signal peptide occupies residues 1–26; that stretch reads MASVSWRAVAVAMVVVLLSLQWFAKG. Cystine bridges form between C87/C346, C247/C264, and C289/C314. An N-linked (GlcNAc...) asparagine glycan is attached at N138. Residue S179 is part of the active site. A glycan (N-linked (GlcNAc...) asparagine) is linked at N259. Residues N335 and N351 are each glycosylated (N-linked (GlcNAc...) asparagine). Residues D383 and H440 contribute to the active site. An N-linked (GlcNAc...) asparagine glycan is attached at N465.

This sequence belongs to the peptidase S10 family. As to expression, expression not detected.

The protein resides in the secreted. Functionally, probable carboxypeptidase. The polypeptide is Serine carboxypeptidase-like 42 (SCPL42) (Arabidopsis thaliana (Mouse-ear cress)).